A 331-amino-acid polypeptide reads, in one-letter code: Ribosomal RNA small subunit methyltransferase H (331 aa).

S-adenosyl-L-methionine-binding positions include 38–40, aspartate 56, phenylalanine 83, aspartate 100, and glutamine 107; that span reads GGY. The disordered stretch occupies residues 308–331; the sequence is TDAPAGPVDPQVLGMPLIPKKGRR.

Belongs to the methyltransferase superfamily. RsmH family.

Its subcellular location is the cytoplasm. The enzyme catalyses cytidine(1402) in 16S rRNA + S-adenosyl-L-methionine = N(4)-methylcytidine(1402) in 16S rRNA + S-adenosyl-L-homocysteine + H(+). Specifically methylates the N4 position of cytidine in position 1402 (C1402) of 16S rRNA. The sequence is that of Ribosomal RNA small subunit methyltransferase H from Cereibacter sphaeroides (strain ATCC 17025 / ATH 2.4.3) (Rhodobacter sphaeroides).